The primary structure comprises 180 residues: Small ribosomal subunit protein uS4 (180 aa).

Positions 102-174 constitute an S4 RNA-binding domain; sequence RRLQTMLVRK…PARKLEQKEE (73 aa). Residues 154–180 are disordered; sequence VPFSPLANPEHPARKLEQKEETNEESA. Basic and acidic residues predominate over residues 164–174; it reads HPARKLEQKEE.

This sequence belongs to the universal ribosomal protein uS4 family. As to quaternary structure, part of the 30S ribosomal subunit. Contacts protein S5. The interaction surface between S4 and S5 is involved in control of translational fidelity.

In terms of biological role, one of the primary rRNA binding proteins, it binds directly to 16S rRNA where it nucleates assembly of the body of the 30S subunit. Its function is as follows. With S5 and S12 plays an important role in translational accuracy. This Nanoarchaeum equitans (strain Kin4-M) protein is Small ribosomal subunit protein uS4.